The primary structure comprises 306 residues: Shugoshin (306 aa).

A coiled-coil region spans residues 28 to 75; the sequence is NFKSTNESLIKKNLQLKQQLSQCTKALEKLRNENIALREQNQELIDAT. Disordered regions lie at residues 122–196 and 223–306; these read PEPS…GRRS and IAPS…DTFF. Positions 133–161 are enriched in basic and acidic residues; it reads PKMECNLEKLDESPVRNFPRSDYEEENKS. Polar residues predominate over residues 167-181; that stretch reads NGPSSSSSMTQNLEN. A compositionally biased stretch (pro residues) spans 230 to 241; it reads GGPPKKAPPRKA.

The protein belongs to the shugoshin family.

The protein localises to the nucleus. The protein resides in the chromosome. It is found in the centromere. Functionally, plays a central role in chromosome cohesion during cell division by preventing premature dissociation of cohesin complex from centromeres after prophase, when most of cohesin complex dissociates from chromosomes arms. This is Shugoshin (sgo-1) from Caenorhabditis briggsae.